A 407-amino-acid polypeptide reads, in one-letter code: Peptidase T (407 aa).

Residue H81 participates in Zn(2+) binding. The active site involves D83. Zn(2+) is bound at residue D142. Residue E176 is the Proton acceptor of the active site. The Zn(2+) site is built by E177, D199, and H381.

This sequence belongs to the peptidase M20B family. The cofactor is Zn(2+).

The protein localises to the cytoplasm. It carries out the reaction Release of the N-terminal residue from a tripeptide.. In terms of biological role, cleaves the N-terminal amino acid of tripeptides. This chain is Peptidase T, found in Streptococcus pneumoniae (strain Taiwan19F-14).